The sequence spans 287 residues: ATP synthase gamma chain (287 aa).

Belongs to the ATPase gamma chain family. In terms of assembly, F-type ATPases have 2 components, CF(1) - the catalytic core - and CF(0) - the membrane proton channel. CF(1) has five subunits: alpha(3), beta(3), gamma(1), delta(1), epsilon(1). CF(0) has three main subunits: a, b and c.

The protein localises to the cell inner membrane. Functionally, produces ATP from ADP in the presence of a proton gradient across the membrane. The gamma chain is believed to be important in regulating ATPase activity and the flow of protons through the CF(0) complex. This is ATP synthase gamma chain from Xanthomonas oryzae pv. oryzae (strain MAFF 311018).